The chain runs to 139 residues: Immunogenic miracidial antigen 8I (139 aa).

The interval 61–139 (IDVGDEDYHD…PKKYGSGYKH (79 aa)) is disordered. The segment covering 64–85 (GDEDYHDGDDDVDYTDDVDDVD) has biased composition (acidic residues). The span at 90-103 (SPSQLLQGGYQRNQ) shows a compositional bias: polar residues.

The protein belongs to the immunogenic miracidial antigen family.

This Schistosoma japonicum (Blood fluke) protein is Immunogenic miracidial antigen 8I (8I).